The sequence spans 238 residues: Ribonuclease PH (238 aa).

Phosphate contacts are provided by residues Arg86 and 124 to 126 (GTR).

Belongs to the RNase PH family. In terms of assembly, homohexameric ring arranged as a trimer of dimers.

The catalysed reaction is tRNA(n+1) + phosphate = tRNA(n) + a ribonucleoside 5'-diphosphate. In terms of biological role, phosphorolytic 3'-5' exoribonuclease that plays an important role in tRNA 3'-end maturation. Removes nucleotide residues following the 3'-CCA terminus of tRNAs; can also add nucleotides to the ends of RNA molecules by using nucleoside diphosphates as substrates, but this may not be physiologically important. Probably plays a role in initiation of 16S rRNA degradation (leading to ribosome degradation) during starvation. The polypeptide is Ribonuclease PH (Pasteurella multocida (strain Pm70)).